The sequence spans 414 residues: Phospholipase A1-IIbeta (414 aa).

Residue Lys19 forms a Glycyl lysine isopeptide (Lys-Gly) (interchain with G-Cter in ubiquitin) linkage. A coiled-coil region spans residues 191 to 217 (DKTSAQEQVQEELKRLLELYKNEDVTI). The Acyl-ester intermediate role is filled by Ser223. Active-site charge relay system residues include Ser223, Asp289, and His326. A disordered region spans residues 386–414 (DGTWKLNGDRSKKKQEEEDEKEENNCKFP). Residues 390–410 (KLNGDRSKKKQEEEDEKEENN) adopt a coiled-coil conformation. Residues 392–401 (NGDRSKKKQE) are compositionally biased toward basic and acidic residues.

This sequence belongs to the AB hydrolase superfamily. Lipase family.

The protein resides in the cytoplasm. Functionally, acylhydrolase that catalyzes the hydrolysis of phospholipids at the sn-1 position. This Arabidopsis thaliana (Mouse-ear cress) protein is Phospholipase A1-IIbeta.